The sequence spans 224 residues: Adenylate kinase (224 aa).

10–15 (GSGKGT) contacts ATP. Residues 30–59 (ESGAIFRDNIKGGTDLGMKAKAYIDKGDLV) are NMP. AMP is bound by residues Ser-31, Arg-36, 57–59 (DLV), 85–88 (GFPR), and Gln-92. The segment at 126 to 165 (GRRLCENDNNHPNNIFIDAIKPNGDKCRVCGGALSSRADD) is LID. ATP is bound at residue Arg-127. 2 residues coordinate AMP: Arg-162 and Arg-174. Asn-211 contributes to the ATP binding site.

The protein belongs to the adenylate kinase family. As to quaternary structure, monomer.

Its subcellular location is the cytoplasm. The enzyme catalyses AMP + ATP = 2 ADP. It functions in the pathway purine metabolism; AMP biosynthesis via salvage pathway; AMP from ADP: step 1/1. Catalyzes the reversible transfer of the terminal phosphate group between ATP and AMP. Plays an important role in cellular energy homeostasis and in adenine nucleotide metabolism. This Desulforapulum autotrophicum (strain ATCC 43914 / DSM 3382 / VKM B-1955 / HRM2) (Desulfobacterium autotrophicum) protein is Adenylate kinase.